The primary structure comprises 234 residues: RNA chaperone ProQ (234 aa).

Residues 104–130 are compositionally biased toward basic and acidic residues; it reads LEEAKARVQAQRDARKREAAENGEKRE. The tract at residues 104-186 is disordered; the sequence is LEEAKARVQA…QRSTPVTSLE (83 aa). Residues 131–142 show a composition bias toward basic residues; sequence PRRPRPAGKKPT. Composition is skewed to basic and acidic residues over residues 143-156 and 163-176; these read ARRD…EVRK and TSER…ETTE. Residues 177-186 are compositionally biased toward polar residues; that stretch reads QRSTPVTSLE.

It belongs to the ProQ family.

Its subcellular location is the cytoplasm. Functionally, RNA chaperone with significant RNA binding, RNA strand exchange and RNA duplexing activities. May regulate ProP activity through an RNA-based, post-transcriptional mechanism. In Edwardsiella ictaluri (strain 93-146), this protein is RNA chaperone ProQ.